The following is a 270-amino-acid chain: Transcription factor bHLH113 (270 aa).

The tract at residues 109–153 (CTVDKSTKSSTKKRTGTGNGQESDQNRKPGKKGKRNQEKSSVGIA) is disordered. The 50-residue stretch at 144–193 (NQEKSSVGIAKVRKERLGERIAALQQLVSPYGKTDAASVLHEAMGYIKFL) folds into the bHLH domain.

Homodimer.

The protein localises to the nucleus. This is Transcription factor bHLH113 (BHLH113) from Arabidopsis thaliana (Mouse-ear cress).